Here is a 1054-residue protein sequence, read N- to C-terminus: Calcium-transporting ATPase 2, endoplasmic reticulum-type (1054 aa).

Residues 1–53 (MEEEKSFSAWSWSVEQCLKEYKTRLDKGLTSEDVQIRRQKYGFNELAKEKGKP) lie on the Cytoplasmic side of the membrane. The chain crosses the membrane as a helical span at residues 54–74 (LWHLVLEQFDDTLVKILLGAA). The Lumenal portion of the chain corresponds to 75–98 (FISFVLAFLGEEHGSGSGFEAFVE). Residues 99–118 (PFVIVLILILNAVVGVWQES) form a helical membrane-spanning segment. Residues 119–262 (NAEKALEALK…ESETPLKKKL (144 aa)) are Cytoplasmic-facing. A helical membrane pass occupies residues 263 to 282 (DEFGSRLTTAICIVCVLVWM). Residues 283 to 312 (INYKNFVSWDVVDGYKPVNIKFSFEKCTYY) lie on the Lumenal side of the membrane. A helical transmembrane segment spans residues 313–330 (FKIAVALAVAAIPEGLPA). Ca(2+) contacts are provided by V321, A322, I324, and E326. The Cytoplasmic segment spans residues 331–782 (VITTCLALGT…AEGRSIYNNM (452 aa)). D368 (4-aspartylphosphate intermediate) is an active-site residue. Mg(2+) contacts are provided by D727 and D731. The helical transmembrane segment at 783–802 (KAFIRYMISSNVGEVISIFL) threads the bilayer. Ca(2+) contacts are provided by N793 and E796. At 803–812 (TAALGIPECM) the chain is on the lumenal side. The helical transmembrane segment at 813–833 (IPVQLLWVNLVTDGPPATALG) threads the bilayer. N821, T824, and D825 together coordinate Ca(2+). Residues 834-853 (FNPADIDIMKKPPRKSDDCL) are Cytoplasmic-facing. A helical membrane pass occupies residues 854 to 876 (IDSWVLIRYLVIGSYVGVATVGI). The Lumenal portion of the chain corresponds to 877–949 (FVLWYTQASF…YFTLGKVKPM (73 aa)). A helical transmembrane segment spans residues 950-969 (TLSLTVLVAIEMFNSLNALS). E960 provides a ligand contact to Ca(2+). Residues 970-982 (EDNSLLTMPPWRN) are Cytoplasmic-facing. A helical membrane pass occupies residues 983–1001 (PWLLVAMTVSFALHCVILY). At 1002–1016 (VPFLANVFGIVPLSF) the chain is on the lumenal side. A helical membrane pass occupies residues 1017-1037 (REWFVVILVSFPVILIDEALK). Residues 1038–1054 (FIGRCRRTRIKKKIKTM) lie on the Cytoplasmic side of the membrane.

The protein belongs to the cation transport ATPase (P-type) (TC 3.A.3) family. Type IIA subfamily.

Its subcellular location is the membrane. It catalyses the reaction Ca(2+)(in) + ATP + H2O = Ca(2+)(out) + ADP + phosphate + H(+). In terms of biological role, this magnesium-dependent enzyme catalyzes the hydrolysis of ATP coupled with the translocation of calcium from the cytosol to an endomembrane compartment. This is Calcium-transporting ATPase 2, endoplasmic reticulum-type (ECA2) from Arabidopsis thaliana (Mouse-ear cress).